Consider the following 359-residue polypeptide: CCAAT/enhancer-binding protein alpha (359 aa).

Residues 1–55 form a disordered region; it reads MESADFYEVEPRPPMSSHLQSPPHAPSNAAFGFPRGAGPAPPPAPPAAPEPLGGI. The required to repress E2F1:TFDP1-mediated transcription, to inhibit cell cycle and to induce adipocyte differentiation stretch occupies residues 1–70; sequence MESADFYEVE…SIDISAYIDP (70 aa). Low complexity predominate over residues 29-38; sequence AAFGFPRGAG. The span at 39–49 shows a compositional bias: pro residues; it reads PAPPPAPPAAP. A required for interaction with TRIB1 region spans residues 54–72; the sequence is GICEHETSIDISAYIDPAA. Positions 126-200 are required to induce adipocyte differentiation; it reads PPGYGCAAAG…HASPAHLAAP (75 aa). An N6-acetyllysine; alternate modification is found at K159. K159 participates in a covalent cross-link: Glycyl lysine isopeptide (Lys-Gly) (interchain with G-Cter in SUMO); alternate. K159 participates in a covalent cross-link: Glycyl lysine isopeptide (Lys-Gly) (interchain with G-Cter in SUMO2); alternate. Disordered regions lie at residues 176 to 195 and 213 to 293; these read LFPY…ASPA and TMHL…RERN. The span at 179 to 191 shows a compositional bias: pro residues; the sequence is YQPPPPPPPPHPH. The interval 180–194 is required to functionally cooperate with SREBF1 in promoter activation; that stretch reads QPPPPPPPPHPHASP. S193 carries the phosphoserine modification. Residues 220-232 show a composition bias toward pro residues; it reads HPTPPPTPVPSPH. 2 positions are modified to phosphothreonine; by GSK3: T222 and T226. S230 carries the post-translational modification Phosphoserine; by GSK3. Over residues 233-255 the composition is skewed to low complexity; it reads AAPALGAAGLPGPGSALKGLAGA. The tract at residues 240-359 is interaction with FOXO1; sequence AGLPGPGSAL…SLVKAMGNCA (120 aa). A compositionally biased stretch (gly residues) spans 261-272; it reads TGGGGGGSGAGA. The span at 277–293 shows a compositional bias: basic and acidic residues; the sequence is KSVDKNSNEYRVRRERN. Residues 283 to 346 form the bZIP domain; sequence SNEYRVRRER…DTLRGIFRQL (64 aa). Residues 286-301 mediate DNA binding; that stretch reads YRVRRERNNIAVRKSR. The segment at 287–314 is basic motif; sequence RVRRERNNIAVRKSRDKAKQRNVETQQK. A leucine-zipper region spans residues 318-346; the sequence is LTSDNDRLRKRVEQLSRELDTLRGIFRQL.

This sequence belongs to the bZIP family. C/EBP subfamily. Binds DNA as a homodimer and as a heterodimer. Can form stable heterodimers with CEBPB, CEBPD, CEBPE and CEBPG. Interacts with PRDM16. Interacts with UBN1. Interacts with ZNF638; this interaction increases transcriptional activation. Interacts with the complex TFDP2:E2F1; the interaction prevents CEBPA binding to target gene promoters and represses its transcriptional activity. Interacts with RB1. Interacts (when phosphorylated at Ser-193) with CDK2, CDK4, E2F4 and SMARCA2. Interacts with SREBPF1. Interacts with FOXO1 (via the Fork-head domain); the interaction increases when FOXO1 is deacetylated. Interacts with SIX1. Interacts (via recognition sequence) with TRIB1. Interacts (via bZIP domain) with OVOL2 (via zinc-finger domains); the interaction inhibits the transcription factor activity of CEBPA and is required to repress adipogenesis. In terms of assembly, interacts with TAF1A and UBTF. As to quaternary structure, interacts with TAF1A and UBTF. Interacts with NPM1. In terms of processing, sumoylated, sumoylation blocks the inhibitory effect on cell proliferation by disrupting the interaction with SMARCA2. Post-translationally, phosphorylation at Ser-193 is required for interaction with CDK2, CDK4 and SWI/SNF complex leading to cell cycle inhibition. Dephosphorylated at Ser-193 by protein phosphatase 2A (PP2A) through PI3K/AKT signaling pathway regulation. Phosphorylation at Thr-222 and Thr-226 by GSK3 is constitutive in adipose tissue and lung. In liver, both Thr-222 and Thr-226 are phosphorylated only during feeding but not during fasting. Phosphorylation of the GSK3 consensus sites selectively decreases transactivation activity on IRE-controlled promoters. Ubiquitinated by COP1 upon interaction with TRIB1. In terms of tissue distribution, isoform 2 and isoform 3 are expressed in adipose tissue and liver (at protein level).

It localises to the nucleus. The protein localises to the nucleolus. In terms of biological role, transcription factor that coordinates proliferation arrest and the differentiation of myeloid progenitors, adipocytes, hepatocytes, and cells of the lung and the placenta. Binds directly to the consensus DNA sequence 5'-T[TG]NNGNAA[TG]-3' acting as an activator on distinct target genes. During early embryogenesis, plays essential and redundant functions with CEBPB. Essential for the transition from common myeloid progenitors (CMP) to granulocyte/monocyte progenitors (GMP). Critical for the proper development of the liver and the lung. Necessary for terminal adipocyte differentiation, is required for postnatal maintenance of systemic energy homeostasis and lipid storage. To regulate these different processes at the proper moment and tissue, interplays with other transcription factors and modulators. Down-regulates the expression of genes that maintain cells in an undifferentiated and proliferative state through E2F1 repression, which is critical for its ability to induce adipocyte and granulocyte terminal differentiation. Reciprocally E2F1 blocks adipocyte differentiation by binding to specific promoters and repressing CEBPA binding to its target gene promoters. Proliferation arrest also depends on a functional binding to SWI/SNF complex. In liver, regulates gluconeogenesis and lipogenesis through different mechanisms. To regulate gluconeogenesis, functionally cooperates with FOXO1 binding to IRE-controlled promoters and regulating the expression of target genes such as PCK1 or G6PC1. To modulate lipogenesis, interacts and transcriptionally synergizes with SREBF1 in promoter activation of specific lipogenic target genes such as ACAS2. In adipose tissue, seems to act as FOXO1 coactivator accessing to ADIPOQ promoter through FOXO1 binding sites. Functionally, can act as dominant-negative. Binds DNA and have transctivation activity, even if much less efficiently than isoform 2. Does not inhibit cell proliferation. Its function is as follows. Directly and specifically enhances ribosomal DNA transcription interacting with RNA polymerase I-specific cofactors and inducing histone acetylation. The protein is CCAAT/enhancer-binding protein alpha of Mus musculus (Mouse).